Here is a 1354-residue protein sequence, read N- to C-terminus: Eukaryotic translation initiation factor 3 subunit A (1354 aa).

The residue at position 68 (Lys-68) is an N6-acetyllysine. The stretch at 82–120 (NIKSLEDVVRAYLKLAEEKTEAAKEESQQMVLDIEDLDN) forms a coiled coil. The PCI domain maps to 315–498 (MQRMSTRVLL…RTLSFGSDLN (184 aa)). A phosphoserine mark is found at Ser-492 and Ser-584. The interaction with EIF3B stretch occupies residues 664–835 (LDPDFIMAKQ…REERERAERA (172 aa)). Disordered regions lie at residues 809–844 (EKEE…LREY), 866–1249 (EERE…RDRD), and 1262–1354 (DLRD…TVRR). 4 stretches are compositionally biased toward basic and acidic residues: residues 866–1136 (EERE…DDAR), 1148–1249 (GWRE…RDRD), 1262–1302 (DLRD…DPPR), and 1310–1343 (SRER…TKNE). Ser-895 is modified (phosphoserine). A 1; truncated repeat occupies 924-931 (DDERPHRR). Positions 924 to 1143 (DDERPHRRDE…DARPGPWRPF (220 aa)) are 22 X 10 AA approximate tandem repeats of [DA]-[DE]-[ED]-R-[PLIGFSV]-[RPS]-[RW]-[RL]-[GNIHT]-[DGLPTAM]. Copy 2 of the repeat occupies 932–941 (DEDRLRRLGG). The 3; approximate repeat unit spans residues 942–951 (DDEERESSLR). Ser-949 is subject to Phosphoserine. 18 repeat units span residues 953 to 962 (DDDRIPRRGL), 963 to 972 (DDDRGPRRGP), 973 to 982 (DEDRFSRRGT), 983 to 992 (DDDRPSWRNA), 993 to 1002 (DDDRPPRRIG), 1003 to 1012 (DDDRGSWRHT), 1013 to 1022 (DDDRPPRRGL), 1023 to 1032 (DDDRPPRRGL), 1033 to 1042 (DDERGSWRTA), 1043 to 1052 (EEDRGPRRGM), 1053 to 1062 (DDDRGPRRGG), 1064 to 1073 (DDERSSWRNA), 1074 to 1083 (DDDRGPRRGM), 1084 to 1093 (DDDRGPRRGL), 1094 to 1103 (DDDRGPWRNA), 1104 to 1113 (AEDRISRRGA), 1114 to 1123 (DDDRGPWRNM), and 1124 to 1133 (DDDRVPRRGD). Residue Ser-1038 is modified to Phosphoserine. The stretch at 1134–1143 (DARPGPWRPF) is one 22; approximate repeat. Residues Ser-1159 and Ser-1233 each carry the phosphoserine modification. Ser-1310 and Ser-1336 each carry phosphoserine.

The protein belongs to the eIF-3 subunit A family. As to quaternary structure, component of the eukaryotic translation initiation factor 3 (eIF-3) complex, which is composed of 13 subunits: EIF3A, EIF3B, EIF3C, EIF3D, EIF3E, EIF3F, EIF3G, EIF3H, EIF3I, EIF3J, EIF3K, EIF3L and EIF3M. The eIF-3 complex appears to include 3 stable modules: module A is composed of EIF3A, EIF3B, EIF3G and EIF3I; module B is composed of EIF3F, EIF3H, and EIF3M; and module C is composed of EIF3C, EIF3D, EIF3E, EIF3L and EIF3K. EIF3C of module C binds EIF3B of module A and EIF3H of module B, thereby linking the three modules. EIF3J is a labile subunit that binds to the eIF-3 complex via EIF3B. The eIF-3 complex interacts with RPS6KB1 under conditions of nutrient depletion. Mitogenic stimulation leads to binding and activation of a complex composed of MTOR and RPTOR, leading to phosphorylation and release of RPS6KB1 and binding of EIF4B to eIF-3. Interacts with EIF4G1. Also interacts with KRT7 and PIWIL2. In terms of processing, phosphorylated. Phosphorylation is enhanced upon serum stimulation.

It is found in the cytoplasm. In terms of biological role, RNA-binding component of the eukaryotic translation initiation factor 3 (eIF-3) complex, which is required for several steps in the initiation of protein synthesis. The eIF-3 complex associates with the 40S ribosome and facilitates the recruitment of eIF-1, eIF-1A, eIF-2:GTP:methionyl-tRNAi and eIF-5 to form the 43S pre-initiation complex (43S PIC). The eIF-3 complex stimulates mRNA recruitment to the 43S PIC and scanning of the mRNA for AUG recognition. The eIF-3 complex is also required for disassembly and recycling of post-termination ribosomal complexes and subsequently prevents premature joining of the 40S and 60S ribosomal subunits prior to initiation. The eIF-3 complex specifically targets and initiates translation of a subset of mRNAs involved in cell proliferation, including cell cycling, differentiation and apoptosis, and uses different modes of RNA stem-loop binding to exert either translational activation or repression. The protein is Eukaryotic translation initiation factor 3 subunit A (Eif3a) of Rattus norvegicus (Rat).